The primary structure comprises 405 residues: Cystathionine gamma-lyase (405 aa).

Substrate is bound by residues Arg62, Tyr114, and Arg119. Lys212 bears the N6-(pyridoxal phosphate)lysine mark. Residue Glu339 participates in substrate binding.

Belongs to the trans-sulfuration enzymes family. As to quaternary structure, homotetramer. Interacts with CALM in a calcium-dependent manner. Pyridoxal 5'-phosphate is required as a cofactor.

It localises to the cytoplasm. It catalyses the reaction L,L-cystathionine + H2O = 2-oxobutanoate + L-cysteine + NH4(+). It functions in the pathway amino-acid biosynthesis; L-cysteine biosynthesis; L-cysteine from L-homocysteine and L-serine: step 2/2. Functionally, catalyzes the last step in the trans-sulfuration pathway from methionine to cysteine. Has broad substrate specificity. Converts cystathionine to cysteine, ammonia and 2-oxobutanoate. Converts two cysteine molecules to lanthionine and hydrogen sulfide. Can also accept homocysteine as substrate. Specificity depends on the levels of the endogenous substrates. Generates the endogenous signaling molecule hydrogen sulfide (H2S), and so contributes to the regulation of blood pressure. Acts as a cysteine-protein sulfhydrase by mediating sulfhydration of target proteins: sulfhydration consists of converting -SH groups into -SSH on specific cysteine residues of target proteins such as GAPDH, PTPN1 and NF-kappa-B subunit RELA, thereby regulating their function. This Bos taurus (Bovine) protein is Cystathionine gamma-lyase (CTH).